The following is an 833-amino-acid chain: Zinc transporter ZIP10 (833 aa).

Positions 1 to 25 (MKVHIHTKFCLICLLTFIFHHCNHC) are cleaved as a signal peptide. Over residues 30–48 (DHGPEELHRHHRGMTESES) the composition is skewed to basic and acidic residues. Disordered stretches follow at residues 30-54 (DHGPEELHRHHRGMTESESSKFSVQ) and 137-167 (AENHTTTSVTSKRNHKCDPEKEAAELPIKAD). Residues 137–147 (AENHTTTSVTS) are compositionally biased toward polar residues. Residues 152–167 (KCDPEKEAAELPIKAD) show a composition bias toward basic and acidic residues. 2 N-linked (GlcNAc...) asparagine glycosylation sites follow: asparagine 191 and asparagine 198. Positions 200 to 209 (SVAHSEHGEP) are enriched in basic and acidic residues. 2 disordered regions span residues 200-257 (SVAH…NHDH) and 271-335 (RVHS…EDDR). Asparagine 218 is a glycosylation site (N-linked (GlcNAc...) asparagine). The span at 229-241 (VKVRRKEKGKRKK) shows a compositional bias: basic residues. Composition is skewed to basic and acidic residues over residues 281-315 (HLPEHSGHELGHGHQELDPDNEGELRHTRKREAPH) and 326-335 (SHKDQSEDDR). Asparagine 341 is a glycosylation site (N-linked (GlcNAc...) asparagine). A run of 2 helical transmembrane segments spans residues 413–433 (IISITVISLLSLLGVILVPII) and 440–460 (FLLTFLVALAVGTMSGDALLH). Residues 466–485 (QGGHDHSHQHTHGHGHSHGH) form a disordered region. A helical transmembrane segment spans residues 497 to 517 (VLKGLVALGGIYLLFIIEHCI). Residues threonine 538 and threonine 555 each carry the phosphothreonine modification. Serine 593 carries the phosphoserine modification. The next 4 membrane-spanning stretches (helical) occupy residues 689-709 (AIGAAFSAGLTGGISTSIAVF), 734-754 (IVYNLLSAMMAYIGMLIGTAV), 761-781 (ITLWIFAITAGMFLYVALVDM), and 803-823 (FILQNLGLLFGFAIMLVIALY).

This sequence belongs to the ZIP transporter (TC 2.A.5) family. In terms of assembly, interacts with SLC39A6. This interaction triggers cells to undergo EMT and mitosis. Found in a complex with SLC39A6, SLC39A10 and with the 'Ser-727' phosphorylated form of STAT3 throughout mitosis. Found in a complex with SLC39A6, SLC39A10 and with NCAM1; this complex controls NCAM1 phosphorylation and integration into focal adhesion complexes during epithelial-tomesenchymal transition. Found in a complex with SLC39A6, SLC39A10 and with GSK3B that controls NCAM1 phosphorylation. Undergoes N-terminal ectodomain shedding. In terms of tissue distribution, expressed in the liver, kidney and brain.

It is found in the cell membrane. Its subcellular location is the apical cell membrane. The enzyme catalyses Zn(2+)(in) = Zn(2+)(out). Its function is as follows. Zinc-influx transporter. When associated with SLC39A6, the heterodimer formed by SLC39A10 and SLC39A6 mediates cellular zinc uptake to trigger cells to undergo epithelial-to-mesenchymal transition (EMT). mediates cellular zinc uptake to trigger cells to undergo epithelial-to-mesenchymal transition (EMT). SLC39A10-SLC39A6 heterodimers play also an essentiel role in initiating mitosis by importing zinc into cells to initiate a pathway resulting in the onset of mitosis. Plays an important for both mature B-cell maintenance and humoral immune responses. When associated with SLC39A10, the heterodimer controls NCAM1 phosphorylation and integration into focal adhesion complexes during EMT. This is Zinc transporter ZIP10 from Mus musculus (Mouse).